Reading from the N-terminus, the 444-residue chain is Methylenetetrahydrofolate--tRNA-(uracil-5-)-methyltransferase TrmFO (444 aa).

Position 10–15 (10–15) interacts with FAD; that stretch reads GAGLAG.

This sequence belongs to the MnmG family. TrmFO subfamily. FAD serves as cofactor.

It is found in the cytoplasm. It carries out the reaction uridine(54) in tRNA + (6R)-5,10-methylene-5,6,7,8-tetrahydrofolate + NADH + H(+) = 5-methyluridine(54) in tRNA + (6S)-5,6,7,8-tetrahydrofolate + NAD(+). It catalyses the reaction uridine(54) in tRNA + (6R)-5,10-methylene-5,6,7,8-tetrahydrofolate + NADPH + H(+) = 5-methyluridine(54) in tRNA + (6S)-5,6,7,8-tetrahydrofolate + NADP(+). Functionally, catalyzes the folate-dependent formation of 5-methyl-uridine at position 54 (M-5-U54) in all tRNAs. The protein is Methylenetetrahydrofolate--tRNA-(uracil-5-)-methyltransferase TrmFO of Streptococcus uberis (strain ATCC BAA-854 / 0140J).